A 273-amino-acid polypeptide reads, in one-letter code: Ribosomal RNA small subunit methyltransferase A (273 aa).

Residues Asn-18, Leu-20, Gly-45, Glu-66, Asp-91, and Asn-113 each contribute to the S-adenosyl-L-methionine site.

This sequence belongs to the class I-like SAM-binding methyltransferase superfamily. rRNA adenine N(6)-methyltransferase family. RsmA subfamily.

The protein localises to the cytoplasm. The enzyme catalyses adenosine(1518)/adenosine(1519) in 16S rRNA + 4 S-adenosyl-L-methionine = N(6)-dimethyladenosine(1518)/N(6)-dimethyladenosine(1519) in 16S rRNA + 4 S-adenosyl-L-homocysteine + 4 H(+). Its function is as follows. Specifically dimethylates two adjacent adenosines (A1518 and A1519) in the loop of a conserved hairpin near the 3'-end of 16S rRNA in the 30S particle. May play a critical role in biogenesis of 30S subunits. The sequence is that of Ribosomal RNA small subunit methyltransferase A from Klebsiella pneumoniae subsp. pneumoniae (strain ATCC 700721 / MGH 78578).